Here is a 205-residue protein sequence, read N- to C-terminus: Small ribosomal subunit protein uS4 (205 aa).

The disordered stretch occupies residues 17–46 (ENIWGRPKSPVNKREYGPGQHGQRRKGKLS). Residues 94 to 157 (SRLDAVVYRA…KQLVIVLESV (64 aa)) enclose the S4 RNA-binding domain.

It belongs to the universal ribosomal protein uS4 family. In terms of assembly, part of the 30S ribosomal subunit. Contacts protein S5. The interaction surface between S4 and S5 is involved in control of translational fidelity.

Functionally, one of the primary rRNA binding proteins, it binds directly to 16S rRNA where it nucleates assembly of the body of the 30S subunit. In terms of biological role, with S5 and S12 plays an important role in translational accuracy. This is Small ribosomal subunit protein uS4 from Mesorhizobium japonicum (strain LMG 29417 / CECT 9101 / MAFF 303099) (Mesorhizobium loti (strain MAFF 303099)).